A 362-amino-acid chain; its full sequence is Putative F-box protein At3g25750 (362 aa).

Residues 4 to 52 (TEWSDLPEELLDLIANRYSSNIDVLRIRSTCKSWRSAVAMSKERLQFRF) enclose the F-box domain.

The protein is Putative F-box protein At3g25750 of Arabidopsis thaliana (Mouse-ear cress).